A 65-amino-acid chain; its full sequence is DNA-directed RNA polymerase subunit Rpo10 (65 aa).

Residues cysteine 7, cysteine 10, cysteine 44, and cysteine 45 each contribute to the Zn(2+) site.

The protein belongs to the archaeal Rpo10/eukaryotic RPB10 RNA polymerase subunit family. In terms of assembly, part of the RNA polymerase complex. The cofactor is Zn(2+).

Its subcellular location is the cytoplasm. It carries out the reaction RNA(n) + a ribonucleoside 5'-triphosphate = RNA(n+1) + diphosphate. In terms of biological role, DNA-dependent RNA polymerase (RNAP) catalyzes the transcription of DNA into RNA using the four ribonucleoside triphosphates as substrates. The sequence is that of DNA-directed RNA polymerase subunit Rpo10 from Thermococcus onnurineus (strain NA1).